We begin with the raw amino-acid sequence, 343 residues long: Tetraacyldisaccharide 4'-kinase (343 aa).

Residue 47 to 54 (SVGGTGKT) coordinates ATP.

Belongs to the LpxK family.

It catalyses the reaction a lipid A disaccharide + ATP = a lipid IVA + ADP + H(+). The protein operates within glycolipid biosynthesis; lipid IV(A) biosynthesis; lipid IV(A) from (3R)-3-hydroxytetradecanoyl-[acyl-carrier-protein] and UDP-N-acetyl-alpha-D-glucosamine: step 6/6. Transfers the gamma-phosphate of ATP to the 4'-position of a tetraacyldisaccharide 1-phosphate intermediate (termed DS-1-P) to form tetraacyldisaccharide 1,4'-bis-phosphate (lipid IVA). In Flavobacterium psychrophilum (strain ATCC 49511 / DSM 21280 / CIP 103535 / JIP02/86), this protein is Tetraacyldisaccharide 4'-kinase.